The chain runs to 340 residues: Sulfotransferase ppzF (340 aa).

Its pathway is secondary metabolite biosynthesis. Sulfotransferase; part of the gene cluster that mediates the biosynthesis of pyrrolopyrazines, secondary metabolites showing insecticidal activity. The role of ppzF within the pathway has still to be determined. The single multifunctional NRPS ppzA is sufficient to produce peramine via condensation of 1-pyrroline-5-carboxylate and arginine, N-methylation of the alpha-amino group of arginine and reduction of the thioester and the cyclization to form an iminium ion resulting in release from the peptide synthetase. Deprotonation of this intermediate and oxidation of the pyrroline ring would give rise to peramine. In Epichloe species that produce only peramine, the peramine synthetase gene is not localized in a gene cluster, in contrast to Metarhizium species that contain additional pyrrolopyrazine biosynthesis genes. The 2-oxoglutarate-Fe(II) type oxidoreductase ppzC hydroxylates peramine to yield the newly identified compound 8-hydroxyperamine whereas ppzD converts L-proline into trans-4-hydroxy-L-proline, a precursor of peramine biosynthesis. This Metarhizium majus (strain ARSEF 297) protein is Sulfotransferase ppzF.